Reading from the N-terminus, the 260-residue chain is Transcription factor MYB4 (260 aa).

HTH myb-type domains follow at residues 12–64 (AVEV…LNYL) and 65–119 (RPGI…SKRS). 2 DNA-binding regions (H-T-H motif) span residues 40–64 (WRML…LNYL) and 92–115 (WSII…NTHL).

It is found in the nucleus. Transcription activator involved in the spatiotemporal regulation of flavonoid biosynthesis specifically in the corms of Montbretia. Activates the promoters of enzymes involved in the biosynthesis of the flavonol myricetin and the flavonol-glycoside montbretin A (MbA). MbA is a potent inhibitor of human pancreatic alpha-amylase and is being developed as drug candidate to treat type-2 diabetes. The sequence is that of Transcription factor MYB4 from Crocosmia x crocosmiiflora (Montbretia).